A 344-amino-acid chain; its full sequence is Methionine import ATP-binding protein MetN (344 aa).

The region spanning 7–245 (ISLKKISRCF…PQDDTTIAML (239 aa)) is the ABC transporter domain. 42–49 (GRSGAGKS) serves as a coordination point for ATP.

The protein belongs to the ABC transporter superfamily. Methionine importer (TC 3.A.1.24) family. As to quaternary structure, the complex is composed of two ATP-binding proteins (MetN), two transmembrane proteins (MetI) and a solute-binding protein (MetQ).

It is found in the cell inner membrane. The enzyme catalyses L-methionine(out) + ATP + H2O = L-methionine(in) + ADP + phosphate + H(+). The catalysed reaction is D-methionine(out) + ATP + H2O = D-methionine(in) + ADP + phosphate + H(+). Its function is as follows. Part of the ABC transporter complex MetNIQ involved in methionine import. Responsible for energy coupling to the transport system. The polypeptide is Methionine import ATP-binding protein MetN (Bartonella henselae (strain ATCC 49882 / DSM 28221 / CCUG 30454 / Houston 1) (Rochalimaea henselae)).